The following is a 5147-amino-acid chain: Cadherin-related tumor suppressor (5147 aa).

An N-terminal signal peptide occupies residues 1 to 35 (MERLLLLFFLLLAGRESLCQTGDTKLELLAPRGRS). Cadherin domains lie at 36–156 (YATT…SPEF), 157–270 (PEPS…PPIF), 271–382 (DHSD…DPII), 383–494 (SFRF…EPVF), 495–599 (EKSE…APQF), 600–708 (SQRE…DPQF), 709–820 (YPRH…LEML), 821–942 (ECGQ…APVF), 943–1049 (ALDR…TPVF), 1050–1153 (DHTS…APQF), 1154–1278 (TNST…APEF), 1279–1384 (LRAP…APEF), 1385–1489 (TQSS…PPIF), 1490–1601 (PSTA…APVF), 1602–1713 (VSMN…VPQF), 1714–1823 (EQRS…PPQF), 1824–1922 (LDTP…PPLF), 1923–2027 (EDTV…APIF), 2028–2167 (DPMS…VPVF), 2168–2278 (ISAN…SPVF), 2279–2385 (DPKQ…PTFL), 2386–2491 (DSPY…DPVF), 2492–2596 (ELQS…IPKF), 2597–2703 (DSTT…FPTF), 2704–2810 (AYMA…APVM), 2811–2913 (EQLI…PPKF), 2914–3013 (TRLF…APEF), 3014–3124 (EHSF…PPKF), 3125–3229 (EQAE…TPRF), 3230–3334 (SVNS…PPVF), 3335–3439 (NHKE…YPQF), 3440–3545 (LQPV…PPEF), 3546–3651 (IKHY…GPTF), and 3652–3756 (TPEG…NPST). Topologically, residues 36-4583 (YATTYEQYAA…GQDAAQVADP (4548 aa)) are extracellular. Asn-239, Asn-257, Asn-276, Asn-280, Asn-402, and Asn-461 each carry an N-linked (GlcNAc...) asparagine glycan. N-linked (GlcNAc...) asparagine glycosylation is found at Asn-605 and Asn-631. N-linked (GlcNAc...) asparagine glycans are attached at residues Asn-1155, Asn-1367, and Asn-1458. Asn-1751, Asn-1831, and Asn-1880 each carry an N-linked (GlcNAc...) asparagine glycan. Asn-2080, Asn-2171, Asn-2247, Asn-2290, Asn-2437, and Asn-2581 each carry an N-linked (GlcNAc...) asparagine glycan. Asn-2799 carries an N-linked (GlcNAc...) asparagine glycan. Residues Asn-2920, Asn-2946, and Asn-2967 are each glycosylated (N-linked (GlcNAc...) asparagine). 5 N-linked (GlcNAc...) asparagine glycosylation sites follow: Asn-3167, Asn-3303, Asn-3386, Asn-3389, and Asn-3525. Residues Asn-3852, Asn-3865, and Asn-3905 are each glycosylated (N-linked (GlcNAc...) asparagine). 4 EGF-like domains span residues 3950 to 4011 (GYEP…EQCS), 4013 to 4049 (RQDP…KHCE), 4052 to 4090 (RSDV…NQCE), and 4092 to 4128 (VSDS…RHCE). 16 disulfide bridges follow: Cys-3954–Cys-3966, Cys-3960–Cys-3999, Cys-4001–Cys-4010, Cys-4017–Cys-4028, Cys-4022–Cys-4037, Cys-4039–Cys-4048, Cys-4056–Cys-4067, Cys-4061–Cys-4078, Cys-4080–Cys-4089, Cys-4096–Cys-4107, Cys-4101–Cys-4116, Cys-4118–Cys-4127, Cys-4294–Cys-4320, Cys-4325–Cys-4341, Cys-4334–Cys-4350, and Cys-4352–Cys-4361. A Laminin G-like 1 domain is found at 4129 to 4320 (RFSYGFQPLS…LQQKGILAGC (192 aa)). N-linked (GlcNAc...) asparagine glycosylation is present at Asn-4306. An EGF-like 5 domain is found at 4321 to 4362 (NRQACQPALAAERCGGFAGQCIDRWSSSLCQCGGHLQSPDCS). The Laminin G-like 2 domain occupies 4402–4569 (DNQQMRERRA…RYHGKIESGC (168 aa)). N-linked (GlcNAc...) asparagine glycosylation is found at Asn-4414, Asn-4471, Asn-4487, Asn-4539, and Asn-4550. Residues Cys-4536 and Cys-4569 are joined by a disulfide bond. A helical membrane pass occupies residues 4584–4609 (LSIGFTLVIVFFVILVVAILGSYVIY). The Cytoplasmic portion of the chain corresponds to 4610 to 5147 (RFRGKQEKIG…NGPAAPEEYV (538 aa)). Residues 4744 to 4771 (PEHYDLENASSIAPSDIDIVYHYKGYRE) form an essential for stability of mitochondrial electron chain complexes I and V, and promotes interaction with ND-24 region. Disordered regions lie at residues 4787–4850 (AYTH…SQQP), 4871–4921 (TSSS…QTSM), and 4967–5041 (GDVD…PIPP). Positions 4826–4835 (SASRTHQSTP) are enriched in polar residues. 2 stretches are compositionally biased toward low complexity: residues 4838 to 4850 (RLSP…SQQP) and 4891 to 4918 (SPVM…QAQQ). Residue Ser-4843 is modified to Phosphoserine. Positions 4972–5008 (HSSTSTDESGNDSFTCSEIEYDNNSLSGDGKYSTSKS) are enriched in polar residues. Ser-5054 and Ser-5061 each carry phosphoserine. The interval 5113 to 5147 (PDTNGPSQQQQQQTQVVSTLRMPSSNGPAAPEEYV) is disordered. Over residues 5119–5131 (SQQQQQQTQVVST) the composition is skewed to low complexity.

In terms of assembly, interacts with Fbxl7. Ft-mito interacts with NADH dehydrogenase subunit ND-24 and with ATP synthase subunit ATPsynC. In terms of processing, phosphorylated by fj on Ser/Thr of cadherin domains. Phosphorylation by fj enhances binding to ds. Phosphorylated in the cytoplasmic domain in a dco-dependent manner which is promoted by ds. Proteolytically cleaved to yield stably associated N- and C-terminal fragments. The C-terminal fragment is processed further to release a 68 kDa mitochondrial fragment, Ft-mito.

It is found in the cell membrane. The protein resides in the apical cell membrane. The protein localises to the mitochondrion. Involved in regulation of planar cell polarity in the compound eye where it is required for correct specification of the R3 and R4 photoreceptor cells by regulating Fz activity in the R3/R4 precursor cells. This is likely to occur through creation of an ft gradient so that the equatorial R3/R4 precursor cell has a higher level of ft function than its polar neighbor. Also required for planar cell polarity of wing hairs. Mediates heterophilic cell adhesion in vitro and is required to stabilize ds on the cell surface. Involved in regulation of eye imaginal disk size. Upstream component of the Hippo pathway where it is likely to act as a cell surface receptor involved in regulation of tissue size and is required for the localization and stability of ex. Probably acts as a cell surface receptor for ds. Its function is as follows. Regulates mitochondrial electron transport chain integrity and promotes oxidative phosphorylation. The sequence is that of Cadherin-related tumor suppressor from Drosophila melanogaster (Fruit fly).